The following is a 132-amino-acid chain: Small ribosomal subunit protein uS8 (132 aa).

Belongs to the universal ribosomal protein uS8 family. As to quaternary structure, part of the 30S ribosomal subunit. Contacts proteins S5 and S12.

In terms of biological role, one of the primary rRNA binding proteins, it binds directly to 16S rRNA central domain where it helps coordinate assembly of the platform of the 30S subunit. The chain is Small ribosomal subunit protein uS8 from Rickettsia felis (strain ATCC VR-1525 / URRWXCal2) (Rickettsia azadi).